We begin with the raw amino-acid sequence, 341 residues long: Transcription factor JunD (341 aa).

The interval 21–49 is disordered; it reads VAGAAGAPGGGGFAPPGRAFPGAPPTSSM. The Menin-binding motif (MBM) signature appears at 35 to 47; sequence PPGRAFPGAPPTS. An MAP kinase docking motif; essential for its phosphorylation motif is present at residues 51–60; sequence KKDALTLSLA. The segment at 65 to 85 is disordered; it reads AGLKPGSATAPSALRPDGAPD. Ser-90 carries the post-translational modification Phosphoserine. Ser-100 carries the post-translational modification Phosphoserine; by MAPK8. Thr-117 is modified (phosphothreonine). Residues 155-176 form a disordered region; sequence AATAATSGAPAPPAPADLAATP. 3 positions are modified to phosphoserine: Ser-245, Ser-249, and Ser-253. The basic motif stretch occupies residues 262–289; the sequence is RIKAERKRLRNRIAASKCRKRKLERISR. The bZIP domain occupies 262-325; the sequence is RIKAERKRLR…AQLKQKVLSH (64 aa). Positions 290 to 318 are leucine-zipper; the sequence is LEEKVKTLKSQNTELASTASLLREQVAQL.

It belongs to the bZIP family. Jun subfamily. As to quaternary structure, heterodimer; binds DNA as a heterodimer. Component of an AP-1 transcription factor complex composed of JUN-FOS heterodimers. As part of the AP-1 transcription factor complex, forms heterodimers with FOS proteins, thereby binding to the AP-1 consensus sequence and stimulating transcription. Forms heterodimers with FOSB; thereby binding to the AP-1 consensus sequence. Interacts (via MBM motif) with MEN1; this interaction represses transcriptional activation. Interacts with MAPK10; this interaction is inhibited in the presence of MEN1. Phosphorylated by MAP kinases MAPK8 and MAPK10; phosphorylation is inhibited in the presence of MEN1.

The protein localises to the nucleus. In terms of biological role, transcription factor binding AP-1 sites. Heterodimerizes with proteins of the FOS family to form an AP-1 transcription factor complex, thereby enhancing their DNA binding activity to an AP-1 consensus sequence 3'-TGA[GC]TCA-5' and enhancing their transcriptional activity. The chain is Transcription factor JunD (Jund) from Rattus norvegicus (Rat).